The following is a 217-amino-acid chain: Flagellar L-ring protein 1 (217 aa).

Positions Met1 to Ala16 are cleaved as a signal peptide. Residue Cys17 is the site of N-palmitoyl cysteine attachment. Residue Cys17 is the site of S-diacylglycerol cysteine attachment.

The protein belongs to the FlgH family. The basal body constitutes a major portion of the flagellar organelle and consists of four rings (L,P,S, and M) mounted on a central rod.

It is found in the cell outer membrane. The protein resides in the bacterial flagellum basal body. Functionally, assembles around the rod to form the L-ring and probably protects the motor/basal body from shearing forces during rotation. In Chromobacterium violaceum (strain ATCC 12472 / DSM 30191 / JCM 1249 / CCUG 213 / NBRC 12614 / NCIMB 9131 / NCTC 9757 / MK), this protein is Flagellar L-ring protein 1.